The primary structure comprises 454 residues: Chromosomal replication initiator protein DnaA (454 aa).

A domain I, interacts with DnaA modulators region spans residues 1 to 74 (MFDLEKFWDS…IQSAYAYAGI (74 aa)). The interval 74–116 (IDIYPVFVVKNGPTPSSERMLEPQPQAKPEKARPQGREFTKDL) is domain II. The interval 88–112 (PSSERMLEPQPQAKPEKARPQGREF) is disordered. The span at 101-112 (KPEKARPQGREF) shows a compositional bias: basic and acidic residues. The segment at 117-333 (RLNEKYTFEN…GALVKVQAQA (217 aa)) is domain III, AAA+ region. ATP contacts are provided by G161, G163, K164, and T165. Residues 334–454 (TIQKQDINIG…VSDLRQMLER (121 aa)) are domain IV, binds dsDNA.

This sequence belongs to the DnaA family. In terms of assembly, oligomerizes as a right-handed, spiral filament on DNA at oriC.

The protein resides in the cytoplasm. In terms of biological role, plays an essential role in the initiation and regulation of chromosomal replication. ATP-DnaA binds to the origin of replication (oriC) to initiate formation of the DNA replication initiation complex once per cell cycle. Binds the DnaA box (a 9 base pair repeat at the origin) and separates the double-stranded (ds)DNA. Forms a right-handed helical filament on oriC DNA; dsDNA binds to the exterior of the filament while single-stranded (ss)DNA is stabiized in the filament's interior. The ATP-DnaA-oriC complex binds and stabilizes one strand of the AT-rich DNA unwinding element (DUE), permitting loading of DNA polymerase. After initiation quickly degrades to an ADP-DnaA complex that is not apt for DNA replication. Binds acidic phospholipids. The chain is Chromosomal replication initiator protein DnaA from Lactobacillus delbrueckii subsp. bulgaricus (strain ATCC 11842 / DSM 20081 / BCRC 10696 / JCM 1002 / NBRC 13953 / NCIMB 11778 / NCTC 12712 / WDCM 00102 / Lb 14).